We begin with the raw amino-acid sequence, 605 residues long: DNA mismatch repair protein MutL (605 aa).

It belongs to the DNA mismatch repair MutL/HexB family.

In terms of biological role, this protein is involved in the repair of mismatches in DNA. It is required for dam-dependent methyl-directed DNA mismatch repair. May act as a 'molecular matchmaker', a protein that promotes the formation of a stable complex between two or more DNA-binding proteins in an ATP-dependent manner without itself being part of a final effector complex. The chain is DNA mismatch repair protein MutL from Pelotomaculum thermopropionicum (strain DSM 13744 / JCM 10971 / SI).